We begin with the raw amino-acid sequence, 141 residues long: Galactose-6-phosphate isomerase subunit LacA (141 aa).

This sequence belongs to the LacAB/RpiB family. Heteromultimeric protein consisting of LacA and LacB.

It catalyses the reaction aldehydo-D-galactose 6-phosphate = keto-D-tagatose 6-phosphate. It participates in carbohydrate metabolism; D-galactose 6-phosphate degradation; D-tagatose 6-phosphate from D-galactose 6-phosphate: step 1/1. This is Galactose-6-phosphate isomerase subunit LacA from Streptococcus pneumoniae serotype 4 (strain ATCC BAA-334 / TIGR4).